Consider the following 189-residue polypeptide: Glycerol-3-phosphate acyltransferase (189 aa).

Transmembrane regions (helical) follow at residues 1 to 21 (MFWLLAILAYLLGSLSFAILL), 51 to 71 (LAILTLLGDLCKGLLPVLIAS), 77 to 97 (LQDQAWIGVCAVIGHLFPLYF), 111 to 131 (MLLGLYPPAALLAVCAWLLTF), and 151 to 171 (LLAWQEPAALLPMSTLTLLIV).

Belongs to the PlsY family. As to quaternary structure, probably interacts with PlsX.

The protein localises to the cell inner membrane. It catalyses the reaction an acyl phosphate + sn-glycerol 3-phosphate = a 1-acyl-sn-glycero-3-phosphate + phosphate. The protein operates within lipid metabolism; phospholipid metabolism. Its function is as follows. Catalyzes the transfer of an acyl group from acyl-phosphate (acyl-PO(4)) to glycerol-3-phosphate (G3P) to form lysophosphatidic acid (LPA). This enzyme utilizes acyl-phosphate as fatty acyl donor, but not acyl-CoA or acyl-ACP. This is Glycerol-3-phosphate acyltransferase from Pseudomonas fluorescens (strain Pf0-1).